A 513-amino-acid chain; its full sequence is Probable DNA ligase (513 aa).

Residue Glu-213 coordinates ATP. Catalysis depends on Lys-215, which acts as the N6-AMP-lysine intermediate. Arg-220, Arg-235, Glu-264, Phe-304, Arg-376, and Lys-382 together coordinate ATP.

This sequence belongs to the ATP-dependent DNA ligase family. Requires Mg(2+) as cofactor.

The enzyme catalyses ATP + (deoxyribonucleotide)n-3'-hydroxyl + 5'-phospho-(deoxyribonucleotide)m = (deoxyribonucleotide)n+m + AMP + diphosphate.. In terms of biological role, DNA ligase that seals nicks in double-stranded DNA during DNA replication, DNA recombination and DNA repair. This chain is Probable DNA ligase, found in Anaeromyxobacter sp. (strain K).